Consider the following 242-residue polypeptide: Aspartate/glutamate leucyltransferase (242 aa).

The protein belongs to the R-transferase family. Bpt subfamily.

The protein resides in the cytoplasm. The catalysed reaction is N-terminal L-glutamyl-[protein] + L-leucyl-tRNA(Leu) = N-terminal L-leucyl-L-glutamyl-[protein] + tRNA(Leu) + H(+). It catalyses the reaction N-terminal L-aspartyl-[protein] + L-leucyl-tRNA(Leu) = N-terminal L-leucyl-L-aspartyl-[protein] + tRNA(Leu) + H(+). In terms of biological role, functions in the N-end rule pathway of protein degradation where it conjugates Leu from its aminoacyl-tRNA to the N-termini of proteins containing an N-terminal aspartate or glutamate. The sequence is that of Aspartate/glutamate leucyltransferase from Alcanivorax borkumensis (strain ATCC 700651 / DSM 11573 / NCIMB 13689 / SK2).